Here is a 233-residue protein sequence, read N- to C-terminus: Small ribosomal subunit protein uS2c (233 aa).

Belongs to the universal ribosomal protein uS2 family.

It is found in the plastid. It localises to the cyanelle. This Cyanophora paradoxa protein is Small ribosomal subunit protein uS2c (rps2).